Here is a 440-residue protein sequence, read N- to C-terminus: Chorismate synthase 1, chloroplastic (440 aa).

Residues 1–54 (MASFVPTKQFVGASSSSDIGSSRLVSLQLPSKFSSSNFHLPSRPSQLKRLEIQA) constitute a chloroplast transit peptide. The interval 100 to 147 (RRRPGQSRITTPRKETDTCKISSGTADGLTTGSPIKVEVPNTDQRGND) is disordered. Positions 118–132 (CKISSGTADGLTTGS) are enriched in polar residues.

Belongs to the chorismate synthase family. In terms of assembly, homotetramer. The cofactor is FMNH2. In terms of tissue distribution, predominantly expressed in flowers and roots and, to a lesser extent, in stems, leaves, and cotyledons.

Its subcellular location is the plastid. The protein resides in the chloroplast. The catalysed reaction is 5-O-(1-carboxyvinyl)-3-phosphoshikimate = chorismate + phosphate. It functions in the pathway metabolic intermediate biosynthesis; chorismate biosynthesis; chorismate from D-erythrose 4-phosphate and phosphoenolpyruvate: step 7/7. In terms of biological role, catalyzes the last common step of the biosynthesis of aromatic amino acids, produced via the shikimic acid pathway. This chain is Chorismate synthase 1, chloroplastic (CS1), found in Solanum lycopersicum (Tomato).